Consider the following 173-residue polypeptide: Invasion protein B homolog BruAb1_0366 (173 aa).

The signal sequence occupies residues 1 to 23 (MKNYRAIGLAFTFTALSSLSAFA).

This sequence belongs to the IalB family.

In Brucella abortus biovar 1 (strain 9-941), this protein is Invasion protein B homolog BruAb1_0366.